Here is an 889-residue protein sequence, read N- to C-terminus: Protein translocase subunit SecA (889 aa).

Residues glutamine 87, 105–109 (GEGKT), and aspartate 494 contribute to the ATP site. A disordered region spans residues 823-889 (ESLRPEEADL…RMDKDTKGKR (67 aa)). A compositionally biased stretch (basic and acidic residues) spans 867 to 889 (PRDDRPMNREERRRMDKDTKGKR).

This sequence belongs to the SecA family. In terms of assembly, monomer and homodimer. Part of the essential Sec protein translocation apparatus which comprises SecA, SecYEG and auxiliary proteins SecDF-YajC and YidC.

It localises to the cell inner membrane. Its subcellular location is the cytoplasm. It carries out the reaction ATP + H2O + cellular proteinSide 1 = ADP + phosphate + cellular proteinSide 2.. In terms of biological role, part of the Sec protein translocase complex. Interacts with the SecYEG preprotein conducting channel. Has a central role in coupling the hydrolysis of ATP to the transfer of proteins into and across the cell membrane, serving as an ATP-driven molecular motor driving the stepwise translocation of polypeptide chains across the membrane. The polypeptide is Protein translocase subunit SecA (Bdellovibrio bacteriovorus (strain ATCC 15356 / DSM 50701 / NCIMB 9529 / HD100)).